Consider the following 327-residue polypeptide: Ribose-phosphate pyrophosphokinase (327 aa).

51-53 (DGE) contacts ATP. Positions 144 and 183 each coordinate Mg(2+). K207 is an active-site residue. Residues R209, D233, and 237 to 241 (DTGGT) contribute to the D-ribose 5-phosphate site.

It belongs to the ribose-phosphate pyrophosphokinase family. Class I subfamily. Homohexamer. The cofactor is Mg(2+).

The protein resides in the cytoplasm. The catalysed reaction is D-ribose 5-phosphate + ATP = 5-phospho-alpha-D-ribose 1-diphosphate + AMP + H(+). Its pathway is metabolic intermediate biosynthesis; 5-phospho-alpha-D-ribose 1-diphosphate biosynthesis; 5-phospho-alpha-D-ribose 1-diphosphate from D-ribose 5-phosphate (route I): step 1/1. Functionally, involved in the biosynthesis of the central metabolite phospho-alpha-D-ribosyl-1-pyrophosphate (PRPP) via the transfer of pyrophosphoryl group from ATP to 1-hydroxyl of ribose-5-phosphate (Rib-5-P). In Prochlorococcus marinus (strain SARG / CCMP1375 / SS120), this protein is Ribose-phosphate pyrophosphokinase.